The primary structure comprises 253 residues: 3-dehydroquinate dehydratase (253 aa).

3-dehydroquinate is bound by residues 46–48 (EWR) and Arg82. Catalysis depends on His143, which acts as the Proton donor/acceptor. The Schiff-base intermediate with substrate role is filled by Lys170. Arg213, Ser232, and Gln236 together coordinate 3-dehydroquinate.

This sequence belongs to the type-I 3-dehydroquinase family. In terms of assembly, homodimer.

It carries out the reaction 3-dehydroquinate = 3-dehydroshikimate + H2O. It functions in the pathway metabolic intermediate biosynthesis; chorismate biosynthesis; chorismate from D-erythrose 4-phosphate and phosphoenolpyruvate: step 3/7. Its function is as follows. Involved in the third step of the chorismate pathway, which leads to the biosynthesis of aromatic amino acids. Catalyzes the cis-dehydration of 3-dehydroquinate (DHQ) and introduces the first double bond of the aromatic ring to yield 3-dehydroshikimate. The sequence is that of 3-dehydroquinate dehydratase from Syntrophotalea carbinolica (strain DSM 2380 / NBRC 103641 / GraBd1) (Pelobacter carbinolicus).